A 117-amino-acid chain; its full sequence is Hydrogenase maturation factor HypA (117 aa).

His-2 provides a ligand contact to Ni(2+). Zn(2+) contacts are provided by Cys-73, Cys-76, Cys-89, and Cys-92.

It belongs to the HypA/HybF family.

Involved in the maturation of [NiFe] hydrogenases. Required for nickel insertion into the metal center of the hydrogenase. The polypeptide is Hydrogenase maturation factor HypA (Shewanella baltica (strain OS195)).